A 443-amino-acid polypeptide reads, in one-letter code: EGF-containing fibulin-like extracellular matrix protein 2 (443 aa).

Positions 1–23 are cleaved as a signal peptide; the sequence is MLPCASCLPGSLLLWALLLLLLG. In terms of domain architecture, EGF-like 1; atypical spans 36–81; sequence YTECTDGYEWDPDSQHCRDVNECLTIPEACKGEMKCINHYGGYLCL. 18 disulfides stabilise this stretch: cysteine 58/cysteine 121, cysteine 65/cysteine 80, cysteine 71/cysteine 109, cysteine 127/cysteine 140, cysteine 134/cysteine 149, cysteine 151/cysteine 162, cysteine 168/cysteine 177, cysteine 173/cysteine 186, cysteine 188/cysteine 201, cysteine 207/cysteine 217, cysteine 213/cysteine 226, cysteine 228/cysteine 241, cysteine 247/cysteine 258, cysteine 254/cysteine 267, cysteine 269/cysteine 281, cysteine 287/cysteine 300, cysteine 294/cysteine 309, and cysteine 315/cysteine 327. The region spanning 123–163 is the EGF-like 2; calcium-binding domain; sequence DVDECAQALHDCRPSQDCHNLPGSYQCTCPDGYRKIGPECV. An EGF-like 3; calcium-binding domain is found at 164–202; that stretch reads DIDECRYRYCQHRCVNLPGSFRCQCEPGFQLGPNNRSCV. N-linked (GlcNAc...) asparagine glycosylation is present at asparagine 198. The 40-residue stretch at 203 to 242 folds into the EGF-like 4; calcium-binding domain; that stretch reads DVNECDMGAPCEQRCFNSYGTFLCRCHQGYELHRDGFSCS. In terms of domain architecture, EGF-like 5; calcium-binding spans 243-282; that stretch reads DIDECSYSSYLCQYRCINEPGRFSCHCPQGYQLLATRLCQ. The EGF-like 6; calcium-binding domain occupies 283–328; it reads DIDECESGAHQCSEAQTCVNFHGGYRCVDTNRCVEPYIQVSENRCL. The N-linked (GlcNAc...) asparagine glycan is linked to asparagine 394.

This sequence belongs to the fibulin family. Homodimer; disulfide-linked. Multimer; allows heparin binding. Monomer. Interacts with FBN1 (via N-terminal domain); this interaction inhibits EFEMP2 binding to LOX and ELN. Interacts with LOX (via propeptide); this interaction is strong and facilitates formation of ternary complexes with ELN during elastic fiber assembly; this interaction limits interaction of EFEMP2 with FBLN5. Interacts with PITX2. Interacts with ELN with moderate affinity; this interaction regulates ELN self-assembly maturation stage. Interacts with FBLN5 with moderate affinity. Interacts with LOXL1 (via propeptide), LTBP1 and TGFB1 stronger than with LOXL2 and LTBP3. Interacts with PCOLCE. Interacts with collagen type IV trimer (COL4A1-COL4A1-COL4A2), NID2 and moderately with COL15A1-derived endostatin. Interacts with EMILIN1; this interaction promotes the incorporation of EFEMP2 into the extracellular matrix. Interacts with LTBP4; the LTBP4 long form (LTBP4L) has a stronger binding affinity than the LTBP4 short form and the LTBP4 long form promotes fibrillar deposition of EFEMP2. In terms of processing, N-glycosylated; contains mostly complex-type glycans. Not O-glycosylated. Cleaved by ELANE; produces a 50-55 kDa fragment. Cleaved by MMP2 and MMP9; produces several fragments.

It localises to the secreted. Its subcellular location is the extracellular space. It is found in the extracellular matrix. The protein localises to the basement membrane. Its function is as follows. Plays a crucial role in elastic fiber formation in tissue, and in the formation of ultrastructural connections between elastic laminae and smooth muscle cells in the aorta, therefore participates in terminal differentiation and maturation of smooth muscle cell (SMC) and in the mechanical properties and wall integrity maintenance of the aorta. In addition, is involved in the control of collagen fibril assembly in tissue throught proteolytic activation of LOX leading to cross- linking of collagen and elastin. Also promotes ELN coacervation and participates in the deposition of ELN coacervates on to microfibrils but also regulates ELN cross- linking through LOX interaction. Moreover adheres to the cells through heparin binding in a calcium-dependent manner and regulates vascularlar smooth muscle cells proliferation through angiotensin signaling. The chain is EGF-containing fibulin-like extracellular matrix protein 2 from Homo sapiens (Human).